The primary structure comprises 350 residues: Major allergen Mal f 1 (350 aa).

The first 22 residues, 1-22 (MRYSTVLAALALLGTSAVSVLA), serve as a signal peptide directing secretion.

It is found in the secreted. The protein resides in the cell wall. This Malassezia furfur (Pityriasis versicolor infection agent) protein is Major allergen Mal f 1.